We begin with the raw amino-acid sequence, 154 residues long: Periplasmic nitrate reductase, electron transfer subunit (154 aa).

Residues 1-24 (MSMHPALRLLATVLVALGAGPAFT) form the signal peptide. The disordered stretch occupies residues 27–47 (APRLTGADRPMSEVAAPPLPE). Heme c is bound by residues H68, C82, C85, H86, H103, C122, C125, and H126.

It belongs to the NapB family. As to quaternary structure, component of the periplasmic nitrate reductase NapAB complex composed of NapA and NapB. In terms of processing, binds 2 heme C groups per subunit.

Its subcellular location is the periplasm. Electron transfer subunit of the periplasmic nitrate reductase complex NapAB. Receives electrons from the membrane-anchored tetraheme c-type NapC protein and transfers these to NapA subunit, thus allowing electron flow between membrane and periplasm. Essential for periplasmic nitrate reduction with nitrate as the terminal electron acceptor. This is Periplasmic nitrate reductase, electron transfer subunit from Cereibacter sphaeroides (Rhodobacter sphaeroides).